The following is a 412-amino-acid chain: Putative phosphate permease PF1020 (412 aa).

A run of 10 helical transmembrane segments spans residues 7–27, 50–70, 88–108, 119–139, 143–163, 187–207, 213–233, 298–318, 335–355, and 384–404; these read MLAD…AWAI, AVII…KTVT, VLIF…VIAT, SIIG…IVNW, IKVV…AYLV, FWIG…VLHG, GFLK…SLIL, WILA…GYKV, FTID…GMPI, and DIII…GIIF.

Belongs to the inorganic phosphate transporter (PiT) (TC 2.A.20) family.

The protein localises to the cell membrane. Potential transporter for phosphate. The polypeptide is Putative phosphate permease PF1020 (Pyrococcus furiosus (strain ATCC 43587 / DSM 3638 / JCM 8422 / Vc1)).